A 326-amino-acid chain; its full sequence is uncharacterized protein (326 aa).

Belongs to the transferase hexapeptide repeat family.

This is an uncharacterized protein from Escherichia coli (strain K12).